The sequence spans 118 residues: Small ribosomal subunit protein uS13 (118 aa).

The interval 91 to 118 is disordered; the sequence is HRRGLPVRGQRTRTNARTRKGPRRPIKK.

Belongs to the universal ribosomal protein uS13 family. As to quaternary structure, part of the 30S ribosomal subunit. Forms a loose heterodimer with protein S19. Forms two bridges to the 50S subunit in the 70S ribosome.

Functionally, located at the top of the head of the 30S subunit, it contacts several helices of the 16S rRNA. In the 70S ribosome it contacts the 23S rRNA (bridge B1a) and protein L5 of the 50S subunit (bridge B1b), connecting the 2 subunits; these bridges are implicated in subunit movement. Contacts the tRNAs in the A and P-sites. This Methylococcus capsulatus (strain ATCC 33009 / NCIMB 11132 / Bath) protein is Small ribosomal subunit protein uS13.